Reading from the N-terminus, the 156-residue chain is Small ribosomal subunit protein uS7 (156 aa).

Belongs to the universal ribosomal protein uS7 family. In terms of assembly, part of the 30S ribosomal subunit. Contacts proteins S9 and S11.

Functionally, one of the primary rRNA binding proteins, it binds directly to 16S rRNA where it nucleates assembly of the head domain of the 30S subunit. Is located at the subunit interface close to the decoding center, probably blocks exit of the E-site tRNA. This Syntrophomonas wolfei subsp. wolfei (strain DSM 2245B / Goettingen) protein is Small ribosomal subunit protein uS7.